The sequence spans 109 residues: Keratin, type II microfibrillar (109 aa).

The segment at 1–10 (QNRQCCESNL) is linker 1. The region spanning 1–109 (QNRQCCESNL…RLYEEEIRVL (109 aa)) is the IF rod domain. Residues 11–109 (EPLFSGYIET…RLYEEEIRVL (99 aa)) are coil 1B.

The protein belongs to the intermediate filament family.

Its function is as follows. Wool microfibrillar keratin. The chain is Keratin, type II microfibrillar from Ovis aries (Sheep).